A 185-amino-acid chain; its full sequence is Ribosome-recycling factor (185 aa).

This sequence belongs to the RRF family.

Its subcellular location is the cytoplasm. Functionally, responsible for the release of ribosomes from messenger RNA at the termination of protein biosynthesis. May increase the efficiency of translation by recycling ribosomes from one round of translation to another. The protein is Ribosome-recycling factor of Hahella chejuensis (strain KCTC 2396).